A 492-amino-acid chain; its full sequence is E3 ubiquitin-protein ligase TRIM35 (492 aa).

At Met-1 the chain carries N-acetylmethionine. 2 positions are modified to phosphoserine: Ser-4 and Ser-8. The RING-type zinc-finger motif lies at Cys-21–Lys-61. The B box-type zinc finger occupies Arg-96–Val-137. The Zn(2+) site is built by Cys-101, His-104, Cys-123, and His-129. A coiled-coil region spans residues Ala-210–Asp-249. A B30.2/SPRY domain is found at Tyr-283–Val-486.

In terms of assembly, interacts with PKM isoform M2, but not isoform M1; this interaction may compete with that between PKM and FGFR1, and hence reduces FGFR1-dependent tyrosine phosphorylation of PKM. Interacts with IRF7; this interaction promotes IRF7 proteasomal degradation. Interacts with TRAF3; this interaction promotes TRAF3 activation.

Its subcellular location is the cytoplasm. It localises to the nucleus. It carries out the reaction S-ubiquitinyl-[E2 ubiquitin-conjugating enzyme]-L-cysteine + [acceptor protein]-L-lysine = [E2 ubiquitin-conjugating enzyme]-L-cysteine + N(6)-ubiquitinyl-[acceptor protein]-L-lysine.. It participates in protein modification; protein ubiquitination. E3 ubiquitin-protein ligase that participates in multiple biological processes including cell death, glucose metabolism, and in particular, the innate immune response. Mediates 'Lys-63'-linked polyubiquitination of TRAF3 thereby promoting type I interferon production via RIG-I signaling pathway. Can also catalyze 'Lys-48'-linked polyubiquitination and proteasomal degradation of viral proteins such as influenza virus PB2. Acts as a negative feedback regulator of TLR7- and TLR9-triggered signaling. Mechanistically, promotes the 'Lys-48'-linked ubiquitination of IRF7 and induces its degradation via a proteasome-dependent pathway. Reduces FGFR1-dependent tyrosine phosphorylation of PKM, inhibiting PKM-dependent lactate production, glucose metabolism, and cell growth. The protein is E3 ubiquitin-protein ligase TRIM35 (TRIM35) of Pongo abelii (Sumatran orangutan).